The chain runs to 519 residues: Putative thymidine phosphorylase (519 aa).

Belongs to the thymidine/pyrimidine-nucleoside phosphorylase family. Type 2 subfamily.

It carries out the reaction thymidine + phosphate = 2-deoxy-alpha-D-ribose 1-phosphate + thymine. This chain is Putative thymidine phosphorylase, found in Maricaulis maris (strain MCS10) (Caulobacter maris).